The chain runs to 152 residues: SsrA-binding protein (152 aa).

The tract at residues 122–152 is disordered; sequence KGKKNHDKRETEAARDWQRDKARLMKGDRGD. The span at 128–152 shows a compositional bias: basic and acidic residues; sequence DKRETEAARDWQRDKARLMKGDRGD.

It belongs to the SmpB family.

Its subcellular location is the cytoplasm. Functionally, required for rescue of stalled ribosomes mediated by trans-translation. Binds to transfer-messenger RNA (tmRNA), required for stable association of tmRNA with ribosomes. tmRNA and SmpB together mimic tRNA shape, replacing the anticodon stem-loop with SmpB. tmRNA is encoded by the ssrA gene; the 2 termini fold to resemble tRNA(Ala) and it encodes a 'tag peptide', a short internal open reading frame. During trans-translation Ala-aminoacylated tmRNA acts like a tRNA, entering the A-site of stalled ribosomes, displacing the stalled mRNA. The ribosome then switches to translate the ORF on the tmRNA; the nascent peptide is terminated with the 'tag peptide' encoded by the tmRNA and targeted for degradation. The ribosome is freed to recommence translation, which seems to be the essential function of trans-translation. This Caulobacter sp. (strain K31) protein is SsrA-binding protein.